The chain runs to 193 residues: Interleukin-18 (193 aa).

A propeptide spanning residues 1–36 (MAAEQVEDNCISFVEMKFINNTLYFVAENDEDLESD) is cleaved from the precursor.

It belongs to the IL-1 family. Forms a ternary complex with ligand-binding receptor subunit IL18R1 and signaling receptor subunit IL18RAP at the plasma membrane. Mature IL18 first binds to IL18R1 forming a low affinity binary complex, which then interacts with IL18RAP to form a high affinity ternary complex that signals inside the cell. Interacts with cargo receptor TMED10; the interaction mediates the translocation from the cytoplasm into the ERGIC (endoplasmic reticulum-Golgi intermediate compartment) and thereby secretion. The pro-IL-18 precursor is processed by CASP1, CASP4 or CASP5 to yield its mature, active form. The pro-IL-18 precursor features autoinhibitory interactions between the propeptide and the post-cleavage-site region, preventing recognition by the IL18R1 receptor. Processing by CASP1, CASP4 or CASP5 induces conformational changes to generate critical receptor-binding sites. The mature form is then secreted and released in the extracellular milieu by passing through the gasdermin-D (GSDMD) pore. In contrast, cleavage by CASP3 inactivates IL18.

The protein resides in the cytoplasm. Its subcellular location is the cytosol. It is found in the secreted. Its function is as follows. Pro-inflammatory cytokine primarily involved in epithelial barrier repair, polarized T-helper 1 (Th1) cell and natural killer (NK) cell immune responses. Upon binding to IL18R1 and IL18RAP, forms a signaling ternary complex which activates NF-kappa-B, triggering synthesis of inflammatory mediators. Synergizes with IL12/interleukin-12 to induce IFNG synthesis from T-helper 1 (Th1) cells and natural killer (NK) cells. Involved in transduction of inflammation downstream of pyroptosis: its mature form is specifically released in the extracellular milieu by passing through the gasdermin-D (GSDMD) pore. The sequence is that of Interleukin-18 (IL18) from Boselaphus tragocamelus (Nilgai).